We begin with the raw amino-acid sequence, 428 residues long: Phosphomethylpyrimidine synthase (428 aa).

Substrate contacts are provided by residues Asn66, Met95, Tyr124, His163, 185-187, 226-229, and Glu265; these read SRG and DGLR. His269 lines the Zn(2+) pocket. Residue Tyr292 coordinates substrate. His333 contacts Zn(2+). 3 residues coordinate [4Fe-4S] cluster: Cys407, Cys410, and Cys414.

It belongs to the ThiC family. It depends on [4Fe-4S] cluster as a cofactor.

The enzyme catalyses 5-amino-1-(5-phospho-beta-D-ribosyl)imidazole + S-adenosyl-L-methionine = 4-amino-2-methyl-5-(phosphooxymethyl)pyrimidine + CO + 5'-deoxyadenosine + formate + L-methionine + 3 H(+). It functions in the pathway cofactor biosynthesis; thiamine diphosphate biosynthesis. Its function is as follows. Catalyzes the synthesis of the hydroxymethylpyrimidine phosphate (HMP-P) moiety of thiamine from aminoimidazole ribotide (AIR) in a radical S-adenosyl-L-methionine (SAM)-dependent reaction. The polypeptide is Phosphomethylpyrimidine synthase (Thermococcus kodakarensis (strain ATCC BAA-918 / JCM 12380 / KOD1) (Pyrococcus kodakaraensis (strain KOD1))).